We begin with the raw amino-acid sequence, 337 residues long: Basic membrane protein A2 (337 aa).

Residues Met-1 to Ser-17 form the signal peptide. The N-palmitoyl cysteine moiety is linked to residue Cys-18. Cys-18 carries S-diacylglycerol cysteine lipidation.

The protein belongs to the BMP lipoprotein family. In terms of assembly, monomer.

The protein resides in the cell inner membrane. Functionally, immunogenic protein. May be part of an ABC-type nucleoside uptake system involved in the purine salvage pathway. This Borrelia garinii subsp. bavariensis (strain ATCC BAA-2496 / DSM 23469 / PBi) (Borreliella bavariensis) protein is Basic membrane protein A2 (bmpA2).